The chain runs to 526 residues: Amine oxidase [flavin-containing] A (526 aa).

Residue M1 is modified to N-acetylmethionine. The Cytoplasmic portion of the chain corresponds to 1 to 497 (MTDLEKPSIT…HTFLERNLPS (497 aa)). The residue at position 383 (S383) is a Phosphoserine. The residue at position 406 (C406) is an S-8alpha-FAD cysteine. A helical; Anchor for type IV membrane protein transmembrane segment spans residues 498-518 (VPGLLKITGFSTSVALLCFVL). At 519-526 (YKFKQPQS) the chain is on the mitochondrial intermembrane side. The tract at residues 520-522 (KFK) is interaction with membrane phospholipid headgroups.

It belongs to the flavin monoamine oxidase family. As to quaternary structure, monomer, homo- or heterodimer (containing two subunits of similar size). Each subunit contains a covalently bound flavin. Enzymatically active as monomer. FAD is required as a cofactor.

The protein localises to the mitochondrion outer membrane. It carries out the reaction a secondary aliphatic amine + O2 + H2O = a primary amine + an aldehyde + H2O2. The catalysed reaction is a primary methyl amine + O2 + H2O = an aldehyde + H2O2 + NH4(+). The enzyme catalyses serotonin + O2 + H2O = (5-hydroxyindol-3-yl)acetaldehyde + H2O2 + NH4(+). It catalyses the reaction (R)-adrenaline + O2 + H2O = (R)-3,4-dihydroxymandelaldehyde + methylamine + H2O2. It carries out the reaction dopamine + O2 + H2O = 3,4-dihydroxyphenylacetaldehyde + H2O2 + NH4(+). The catalysed reaction is tyramine + O2 + H2O = (4-hydroxyphenyl)acetaldehyde + H2O2 + NH4(+). The enzyme catalyses (R)-noradrenaline + O2 + H2O = (R)-3,4-dihydroxymandelaldehyde + H2O2 + NH4(+). It catalyses the reaction kynuramine + O2 + H2O = 3-(2-aminophenyl)-3-oxopropanal + H2O2 + NH4(+). It carries out the reaction tryptamine + O2 + H2O = indole-3-acetaldehyde + H2O2 + NH4(+). The catalysed reaction is 2-phenylethylamine + O2 + H2O = 2-phenylacetaldehyde + H2O2 + NH4(+). Catalyzes the oxidative deamination of biogenic and xenobiotic amines and has important functions in the metabolism of neuroactive and vasoactive amines in the central nervous system and peripheral tissues. Preferentially oxidizes serotonin. Also catalyzes the oxidative deamination of kynuramine to 3-(2-aminophenyl)-3-oxopropanal that can spontaneously condense to 4-hydroxyquinoline. The sequence is that of Amine oxidase [flavin-containing] A from Mus musculus (Mouse).